A 95-amino-acid chain; its full sequence is MTITKAKIAAMLSSKLGFSNHLCEEIVHTVFSNILEIAKAQKLTLKNFGSFEVKQKNPRPGINFHTKALVIIESKKHLRFVPSSKLKALINESTR.

This sequence belongs to the bacterial histone-like protein family.

In Rickettsia rickettsii, this protein is Histone-like DNA-binding protein.